The primary structure comprises 37 residues: Large ribosomal subunit protein bL36 (37 aa).

It belongs to the bacterial ribosomal protein bL36 family.

The polypeptide is Large ribosomal subunit protein bL36 (Pelotomaculum thermopropionicum (strain DSM 13744 / JCM 10971 / SI)).